Here is a 398-residue protein sequence, read N- to C-terminus: tRNA-specific 2-thiouridylase MnmA (398 aa).

Residues 20-27 (AMSGGVDS) and L46 each bind ATP. Catalysis depends on C114, which acts as the Nucleophile. A disulfide bridge links C114 with C210. ATP is bound at residue G138. The interval 160–162 (RDQ) is interaction with tRNA. C210 serves as the catalytic Cysteine persulfide intermediate.

It belongs to the MnmA/TRMU family.

The protein localises to the cytoplasm. It carries out the reaction S-sulfanyl-L-cysteinyl-[protein] + uridine(34) in tRNA + AH2 + ATP = 2-thiouridine(34) in tRNA + L-cysteinyl-[protein] + A + AMP + diphosphate + H(+). Catalyzes the 2-thiolation of uridine at the wobble position (U34) of tRNA, leading to the formation of s(2)U34. The polypeptide is tRNA-specific 2-thiouridylase MnmA (Brucella melitensis biotype 1 (strain ATCC 23456 / CCUG 17765 / NCTC 10094 / 16M)).